Here is a 261-residue protein sequence, read N- to C-terminus: Aquaporin-8 (261 aa).

Residues 1-36 (MSGETPMCSIDLSEVKAKETRMAGRFRVSWYEQYIQ) lie on the Cytoplasmic side of the membrane. Residues 37-57 (PCVVELLGSALFIFIGCLSVI) traverse the membrane as a helical segment. The residue at position 53 (C53) is a Cysteine persulfide. C53 bears the Cysteine sulfenic acid (-SOH) mark. The Extracellular portion of the chain corresponds to 58–84 (ENSPDTGLLQPALAHGLALGLIIATLG). Residues 85 to 105 (NISGGHFNPAVSLAVTVIGGL) form a helical membrane-spanning segment. The NPA 1 motif lies at 92–94 (NPA). At 106–107 (KT) the chain is on the cytoplasmic side. Residues 108 to 128 (MLLIPYWISQIFGGLIGAALA) traverse the membrane as a helical segment. At 129-156 (KVVSPEERFWNASGAAFAIVQEQEQVTE) the chain is on the extracellular side. N-linked (GlcNAc...) asparagine glycosylation occurs at N139. Residues 157–177 (ALGVEIILTILLVLAVCMGAV) form a helical membrane-spanning segment. Residues 178–183 (NEKTMG) are Cytoplasmic-facing. A helical transmembrane segment spans residues 184 to 204 (PLAPFSIGFSVIVDILAGGGI). Residues 205-228 (SGACMNPARAFGPAVVAGYWDFHW) are Extracellular-facing. An NPA 2 motif is present at residues 210–212 (NPA). The helical transmembrane segment at 229–249 (IYWLGPLLAGLFVGLLIRLFI) threads the bilayer. Over 250 to 261 (GDEKTRLILKSR) the chain is Cytoplasmic.

It belongs to the MIP/aquaporin (TC 1.A.8) family. Post-translationally, sulfenylation at Cys-53(C53-SOH) when hydrogen peroxide flows through the AQP8 channel, making it susceptible to hydrogen sulfide produced by CBS. In terms of processing, persulfidation at Cys-53 is required to gate AQP8 channel; under stress condition, hydrogen peroxide accumulates in the cell leading to CBS activation that produces hydrogen sulfide inducing persulfidation of oxidized Cys-53 (C53-SOH). N-glycosylated.

It localises to the cell membrane. The protein resides in the mitochondrion inner membrane. The protein localises to the apical cell membrane. It is found in the basolateral cell membrane. Its subcellular location is the smooth endoplasmic reticulum membrane. It catalyses the reaction H2O(in) = H2O(out). The catalysed reaction is H2O2(out) = H2O2(in). The enzyme catalyses formamide(out) = formamide(in). It carries out the reaction methylamine(out) = methylamine(in). Reversibly gated by a two-step sulfenylation-persulfidation process in cells undergoing diverse stresses. Functionally, channel that allows the facilitated permeation of water and uncharged molecules, such as hydrogen peroxide and the neutral form of ammonia (NH3), through cellular membranes such as plasma membrane, inner mitochondrial membrane and endoplasmic reticulum membrane of several tissues. The transport of ammonia neutral form induces a parallel transport of proton, at alkaline pH when the concentration of ammonia is high. However, it is unclear whether the transport of proton takes place via the aquaporin or via an endogenous pathway. Also, may transport ammonia analogs such as formamide and methylamine, a transport favourited at basic pH due to the increase of unprotonated (neutral) form, which is expected to favor diffusion. Does not transport urea or glycerol. The water transport mechanism is mercury- and copper-sensitive and passive in response to osmotic driving forces. At the canicular plasma membrane, mediates the osmotic transport of water toward the bile canaliculus and facilitates the cAMP-induced bile canalicular water secretion, a process involved in bile formation. In addition, mediates the hydrogen peroxide release from hepatocyte mitochondria that modulates the SREBF2-mediated cholesterol synthesis and facilitates the mitochondrial ammonia uptake which is metabolized into urea, mainly under glucagon stimulation. In B cells, transports the CYBB-generated hydrogen peroxide from the external leaflet of the plasma membrane to the cytosol to promote B cell activation and differentiation for signal amplification. In the small intestine and colon system, mediates water transport through mitochondria and apical membrane of epithelial cells. May play an important role in the adaptive response of proximal tubule cells to acidosis possibly facilitating mitochondrial ammonia transport. In Notomys alexis (Spinifex hopping mouse), this protein is Aquaporin-8.